The primary structure comprises 349 residues: MSKFLKKIKIIKPDDWHVHLRDNEILKKVSQYTGTFYKRAIIMPNLEEPITNCFRSISYRRRILNSMTPNTAFQPLMICYLTEKTSPEELQQGFFKKIFVGAKLYPHCSTTNSKYGIKNINNIYHLFNIMEKIKMPLLIHGEENNLNIDIYDREAKFIENTLKPLRKKFPELKIILEHITTEEAISYIEECNSSYLAGTITPHHLMLNRNNMFIDGIQPHLYCLPLLKRKKHQIALRNVISSGSKNFFLGSDTAPHFHKNKINTFGCAGIFNAPSSLLCYVSVFEEMNALQHFQSFCSENGPNFYNMPINKETITLVKKPHKILEKINIGKNIIVPFLAGKRLDWSIEK.

Residues histidine 17 and histidine 19 each contribute to the Zn(2+) site. Substrate is bound by residues 19 to 21 (HLR) and asparagine 45. The Zn(2+) site is built by lysine 103, histidine 140, and histidine 178. Lysine 103 is modified (N6-carboxylysine). Histidine 140 lines the substrate pocket. Position 224 (leucine 224) interacts with substrate. A Zn(2+)-binding site is contributed by aspartate 252. The active site involves aspartate 252. Substrate-binding residues include histidine 256 and alanine 268.

This sequence belongs to the metallo-dependent hydrolases superfamily. DHOase family. Class II DHOase subfamily. Homodimer. It depends on Zn(2+) as a cofactor.

It carries out the reaction (S)-dihydroorotate + H2O = N-carbamoyl-L-aspartate + H(+). It participates in pyrimidine metabolism; UMP biosynthesis via de novo pathway; (S)-dihydroorotate from bicarbonate: step 3/3. Functionally, catalyzes the reversible cyclization of carbamoyl aspartate to dihydroorotate. The sequence is that of Dihydroorotase from Buchnera aphidicola subsp. Schizaphis graminum (strain Sg).